The chain runs to 381 residues: MPFGNTHNKWKLNYSAAEEFPDLSKHNNHMAKALTLDIYKKLRDKETPSGFTLDDVIQTGVDNPGHPFIMTVGCVAGDEECYEVFKDLFDPVIEDRHGGYKPTDKHKTDLNQDNLKGGDDLDPNYVLSSRVRTGRSIKGIALPPHCSRGERRLVEKLCIEGLATLTGEFQGKYYPLSTMSDAEQQQLIDDHFLFDKPISPLLLASGMARDWPDGRGIWHNNDKSFLVWVNEEDHLRVISMQKGGNMKEVFRRFCVGLKKIEEIFVKAGRGFMWNEHLGYVLTCPSNLGTGLRGGVHVKIPHLCKHEKFSEVLKRTRLQKRGTGGVDTEAVGSIYDISNADRLGFSEVEQVQMVVDGVKLMVEMEKRLENGKSIDDLIPAQK.

A Phosphagen kinase N-terminal domain is found at 11–98; it reads KLNYSAAEEF…FDPVIEDRHG (88 aa). The region spanning 125 to 367 is the Phosphagen kinase C-terminal domain; it reads YVLSSRVRTG…KLMVEMEKRL (243 aa). ATP contacts are provided by residues 128–132, histidine 191, arginine 236, arginine 292, 320–325, and aspartate 335; these read SSRVR and RGTGGV.

Belongs to the ATP:guanido phosphotransferase family. In terms of assembly, dimer of identical or non-identical chains. With MM being the major form in skeletal muscle and myocardium, MB existing in myocardium, and BB existing in many tissues, especially brain.

It is found in the cytoplasm. The enzyme catalyses creatine + ATP = N-phosphocreatine + ADP + H(+). Functionally, reversibly catalyzes the transfer of phosphate between ATP and various phosphogens (e.g. creatine phosphate). Creatine kinase isoenzymes play a central role in energy transduction in tissues with large, fluctuating energy demands, such as skeletal muscle, heart, brain and spermatozoa. This chain is Creatine kinase M-type, found in Torpedo marmorata (Marbled electric ray).